The primary structure comprises 183 residues: Ribosome maturation factor RimP (183 aa).

The protein belongs to the RimP family.

It localises to the cytoplasm. Functionally, required for maturation of 30S ribosomal subunits. This chain is Ribosome maturation factor RimP, found in Leptothrix cholodnii (strain ATCC 51168 / LMG 8142 / SP-6) (Leptothrix discophora (strain SP-6)).